An 81-amino-acid chain; its full sequence is uncharacterized protein (81 aa).

Expressed in fetal brain.

This is an uncharacterized protein from Homo sapiens (Human).